The sequence spans 189 residues: uncharacterized protein (189 aa).

Helical transmembrane passes span 35 to 55, 97 to 117, 123 to 143, and 144 to 164; these read IIWYGVSIAVIVILADMAVMK, GVLQTHIGLWTASLIFAALHF, WLLFIMVTAISFLLGLMYEWT, and GNLFVPMTAHFIIDAVFACQI.

It is found in the cell membrane. This is an uncharacterized protein from Bacillus subtilis (strain 168).